A 102-amino-acid chain; its full sequence is Protein translation factor SUI1 homolog (102 aa).

This sequence belongs to the SUI1 family.

The chain is Protein translation factor SUI1 homolog from Methanosarcina mazei (strain ATCC BAA-159 / DSM 3647 / Goe1 / Go1 / JCM 11833 / OCM 88) (Methanosarcina frisia).